Here is a 104-residue protein sequence, read N- to C-terminus: 2,4-dinitrotoluene dioxygenase system, ferredoxin component (104 aa).

The tract at residues 1–21 is disordered; sequence MSENWIDAAARDEVPRGRRDR. The 97-residue stretch at 5 to 101 folds into the Rieske domain; sequence WIDAAARDEV…VKIENMRVML (97 aa). Residues Cys-45, His-47, Cys-64, and His-67 each coordinate [2Fe-2S] cluster.

Belongs to the bacterial ring-hydroxylating dioxygenase ferredoxin component family. The 2,4-dinitrotoluene dioxygenase (DNTDO) multicomponent enzyme system is composed of an electron transfer component and a dioxygenase component (iron sulfur protein (ISP)). The electron transfer component is composed of a ferredoxin reductase (DntAa) and a ferredoxin (DntAb), and the dioxygenase component is formed of a large alpha subunit (DntAc) and a small beta subunit (DntAd). [2Fe-2S] cluster serves as cofactor.

In terms of biological role, component of the 2,4-dinitrotoluene dioxygenase (DNTDO) multicomponent enzyme system which catalyzes the incorporation of both atoms of molecular oxygen into 2,4-dinitrotoluene (DNT) to form 4-methyl-5-nitrocatechol (MNC) and nitrite. Functions as an intermediate electron transfer protein via a specific interaction with iron sulfur protein components (ISP)(DntAc and DntAd). Also able to convert naphthalene to cis-(1R,2S)-dihydroxy-1,2-dihydronaphthalene. This chain is 2,4-dinitrotoluene dioxygenase system, ferredoxin component, found in Burkholderia sp. (strain RASC).